We begin with the raw amino-acid sequence, 492 residues long: N-succinylglutamate 5-semialdehyde dehydrogenase (492 aa).

Residue 220–225 (GSANTG) coordinates NAD(+). Active-site residues include E243 and C277.

This sequence belongs to the aldehyde dehydrogenase family. AstD subfamily.

It carries out the reaction N-succinyl-L-glutamate 5-semialdehyde + NAD(+) + H2O = N-succinyl-L-glutamate + NADH + 2 H(+). It functions in the pathway amino-acid degradation; L-arginine degradation via AST pathway; L-glutamate and succinate from L-arginine: step 4/5. In terms of biological role, catalyzes the NAD-dependent reduction of succinylglutamate semialdehyde into succinylglutamate. The chain is N-succinylglutamate 5-semialdehyde dehydrogenase from Escherichia coli (strain SE11).